We begin with the raw amino-acid sequence, 256 residues long: MSKDLISTDEYIKIKKKRKRIKKIVVLFIFLISILVTLCLKIPYFNIESIEIKGNVNIPKEVIKDSSTIKTGNNIFYTNKKDAIENISLNPYIEEVKITKKLPNKLQIYVKEREALFYNKVDNDFFIISKNGCVLEKRKEIKNMKLINLQGFEFNESKIGSALKAKDERAVKILNDFGVLLKNNTSDVIFTQLDLRNLLDIKIYYNGICVKIGTSDQIEKKLNTAINILKRDELKKAKKGYVDVSYEGNPVFYIEK.

Over 1–23 the chain is Cytoplasmic; it reads MSKDLISTDEYIKIKKKRKRIKK. A helical membrane pass occupies residues 24–44; the sequence is IVVLFIFLISILVTLCLKIPY. Positions 45-113 constitute a POTRA domain; the sequence is FNIESIEIKG…NKLQIYVKER (69 aa). Residues 45–256 lie on the Extracellular side of the membrane; it reads FNIESIEIKG…EGNPVFYIEK (212 aa).

This sequence belongs to the FtsQ/DivIB family. DivIB subfamily.

It localises to the cell membrane. Functionally, cell division protein that may be involved in stabilizing or promoting the assembly of the division complex. This Clostridium botulinum (strain Hall / ATCC 3502 / NCTC 13319 / Type A) protein is Cell division protein DivIB.